A 723-amino-acid chain; its full sequence is Solute carrier organic anion transporter family member 4A1 (723 aa).

Topologically, residues 1 to 102 (MPQHAMGDTH…KCLQVFNTPK (102 aa)) are cytoplasmic. The segment at 23–64 (SSATDSGCDTPPSSRASPASLRSAHGTLGSSSQPLFEPQAEK) is disordered. Residues 33 to 46 (PPSSRASPASLRSA) show a composition bias toward low complexity. Serine 39, serine 42, and serine 45 each carry phosphoserine. A helical transmembrane segment spans residues 103–123 (GFLFFLCAASFLQGMTVNGFI). Residues 124-142 (NTVITSIERRFDLHSYQSG) lie on the Extracellular side of the membrane. The chain crosses the membrane as a helical span at residues 143–163 (LIASSYDIAACLCLTFVSYFG). Over 164 to 169 (GNGHKP) the chain is Cytoplasmic. The chain crosses the membrane as a helical span at residues 170-194 (RWLGWGVLVLGIGSLVFALPHFTAG). The Extracellular portion of the chain corresponds to 195–224 (RYEVEMDEGLGTGTCLTNQSHVECKDSASG). The N-linked (GlcNAc...) asparagine glycan is linked to asparagine 212. A helical transmembrane segment spans residues 225-255 (LSNYRLIFMLGQLLHGVGATPLYTLGVTYLD). Residues 256–274 (ENVKSSYSPIYIAIFYTAA) lie on the Cytoplasmic side of the membrane. The chain crosses the membrane as a helical span at residues 275-295 (ILGPAAGYLIGGAMLNVYTEV). The Extracellular segment spans residues 296–309 (GQRTELTTDSPLWV). A helical membrane pass occupies residues 310-334 (GAWWIGFLGTGIAAFLIAIPILGYP). Residues 335 to 380 (RQLPGSQRYVVMRAAETQQLKDHSRGAVSNPAFGKTVRDLPLSIWL) lie on the Cytoplasmic side of the membrane. The helical transmembrane segment at 381-402 (LLRNPTFILLCLAGATEATLIA) threads the bilayer. Over 403-422 (GMSTFGPKFFEAQFSLSASE) the chain is Extracellular. Residues 423-446 (AATLFGYLVVPAGGGGTLLGGFLV) form a helical membrane-spanning segment. The Cytoplasmic segment spans residues 447–450 (NKFK). The helical transmembrane segment at 451–473 (LRGSGIIRFCLFCTLTSLLAFFV) threads the bilayer. At 474-582 (FLMHCPNVHM…ASTCQSKPFL (109 aa)) the chain is on the extracellular side. One can recognise a Kazal-like domain in the interval 500–557 (LDLKAACNAIYCCQPKHYSPLCGSDGTMYYSPCYAGCPADAETDLGGQKVYRGCSCIL). 2 disulfides stabilise this stretch: cysteine 506–cysteine 536 and cysteine 521–cysteine 555. Asparagine 566 carries an N-linked (GlcNAc...) asparagine glycan. A helical membrane pass occupies residues 583–605 (LVLVFVVIIFTFLSSIPALTATL). The Cytoplasmic segment spans residues 606–614 (RCVSDRQRS). Residues 615–640 (FALGIQWIVVRTLGSIPGPIAFGWVI) form a helical membrane-spanning segment. Residues 641–673 (DKACLLWQDQCGHQGSCFVYENEAMSRYMLIAG) are Extracellular-facing. A helical transmembrane segment spans residues 674–691 (LTFKVLGFLFFVAAYFLY). Residues 692–723 (KSPSVSSDGLEASLPSQSSASDSPTEQLQSNV) are Cytoplasmic-facing. Residues 700-723 (GLEASLPSQSSASDSPTEQLQSNV) are disordered. Positions 701–723 (LEASLPSQSSASDSPTEQLQSNV) are enriched in low complexity.

This sequence belongs to the organo anion transporter (TC 2.A.60) family.

It is found in the cell membrane. The enzyme catalyses 3,3',5-triiodo-L-thyronine(out) + L-glutamate(in) = 3,3',5-triiodo-L-thyronine(in) + L-glutamate(out). The catalysed reaction is L-thyroxine(out) + L-glutamate(in) = L-thyroxine(in) + L-glutamate(out). It catalyses the reaction estrone 3-sulfate(out) + L-glutamate(in) = estrone 3-sulfate(in) + L-glutamate(out). It carries out the reaction taurocholate(out) + L-glutamate(in) = taurocholate(in) + L-glutamate(out). The enzyme catalyses 3,3',5-triiodo-L-thyronine(out) = 3,3',5-triiodo-L-thyronine(in). The catalysed reaction is L-thyroxine(out) = L-thyroxine(in). It catalyses the reaction 3,3',5'-triiodo-L-thyronine(out) = 3,3',5'-triiodo-L-thyronine(in). It carries out the reaction estrone 3-sulfate(out) = estrone 3-sulfate(in). The enzyme catalyses 17beta-estradiol 17-O-(beta-D-glucuronate)(out) = 17beta-estradiol 17-O-(beta-D-glucuronate)(in). The catalysed reaction is taurocholate(out) = taurocholate(in). It catalyses the reaction prostaglandin E2(out) = prostaglandin E2(in). Functionally, organic anion antiporter with apparent broad substrate specificity. Recognizes various substrates including thyroid hormones 3,3',5-triiodo-L-thyronine (T3), L-thyroxine (T4) and 3,3',5'-triiodo-L-thyronine (rT3), conjugated steroids such as estrone 3-sulfate and estradiol 17-beta glucuronide, bile acids such as taurocholate and prostanoids such as prostaglandin E2, likely operating in a tissue-specific manner. May be involved in uptake of metabolites from the circulation into organs such as kidney, liver or placenta. Possibly drives the selective transport of thyroid hormones and estrogens coupled to an outward glutamate gradient across the microvillous membrane of the placenta. The transport mechanism, its electrogenicity and potential tissue-specific counterions remain to be elucidated. The sequence is that of Solute carrier organic anion transporter family member 4A1 (Slco4a1) from Mus musculus (Mouse).